Consider the following 995-residue polypeptide: Bifunctional glutamine synthetase adenylyltransferase/adenylyl-removing enzyme (995 aa).

Residues 1-474 (MNHSAPGNAD…HYEKLFEGDD (474 aa)) form an adenylyl removase region. GlnE regions lie at residues 122-333 (RRMK…MKRQ) and 637-853 (SYEE…MRRA). The adenylyl transferase stretch occupies residues 479–995 (AKLPALDYSA…LEGTSPASAR (517 aa)).

The protein belongs to the GlnE family. Requires Mg(2+) as cofactor.

It carries out the reaction [glutamine synthetase]-O(4)-(5'-adenylyl)-L-tyrosine + phosphate = [glutamine synthetase]-L-tyrosine + ADP. The catalysed reaction is [glutamine synthetase]-L-tyrosine + ATP = [glutamine synthetase]-O(4)-(5'-adenylyl)-L-tyrosine + diphosphate. In terms of biological role, involved in the regulation of glutamine synthetase GlnA, a key enzyme in the process to assimilate ammonia. When cellular nitrogen levels are high, the C-terminal adenylyl transferase (AT) inactivates GlnA by covalent transfer of an adenylyl group from ATP to specific tyrosine residue of GlnA, thus reducing its activity. Conversely, when nitrogen levels are low, the N-terminal adenylyl removase (AR) activates GlnA by removing the adenylyl group by phosphorolysis, increasing its activity. The regulatory region of GlnE binds the signal transduction protein PII (GlnB) which indicates the nitrogen status of the cell. This chain is Bifunctional glutamine synthetase adenylyltransferase/adenylyl-removing enzyme, found in Bradyrhizobium diazoefficiens (strain JCM 10833 / BCRC 13528 / IAM 13628 / NBRC 14792 / USDA 110).